The primary structure comprises 502 residues: Zinc finger C3HC-type protein 1 (502 aa).

N-acetylalanine is present on alanine 2. Serine 24 carries the post-translational modification Phosphoserine. Threonine 28 carries the phosphothreonine modification. The interval 36-73 is disordered; it reads IDEGIAPEEGGVDAKDTSATSQSVNGSPQAEQPSLEST. Residues 52 to 72 show a composition bias toward polar residues; the sequence is TSATSQSVNGSPQAEQPSLES. Residues serine 58 and serine 62 each carry the phosphoserine modification. At threonine 84 the chain carries Phosphothreonine. The C3HC-type zinc-finger motif lies at 102–156; that stretch reads CAKYGWVTVECDMLKCSSCQAFLCASLQPAFDFDRYKQRCAELKKALCTAHEKFC. The interval 170 to 210 is F-box-like; the sequence is LPLDEPAILVSEFLDRFQSLCHLDLQLPSLRPEDLKTMCLT. The tract at residues 302-423 is disordered; the sequence is SSPIPGLEGR…SSRSFFDPTS (122 aa). Phosphoserine occurs at positions 321 and 329. The span at 327–338 shows a compositional bias: polar residues; that stretch reads TRSQDATFSPGS. Threonine 333 carries the phosphothreonine modification. A phosphoserine mark is found at serine 335, serine 338, serine 344, serine 354, serine 359, and serine 370. Residues 351-360 are compositionally biased toward polar residues; that stretch reads RTRSWDSSSP. The segment covering 371–380 has biased composition (low complexity); the sequence is PTTRTRPVTR. The residue at position 381 (serine 381) is a Phosphoserine. Phosphothreonine occurs at positions 384 and 387. Serine 395 carries the post-translational modification Phosphoserine. A Nuclear localization signal motif is present at residues 396–402; that stretch reads PLRKAKR. Serine 407 and serine 483 each carry phosphoserine. Over residues 407–422 the composition is skewed to low complexity; that stretch reads SSSSSDTSSRSFFDPT.

As to quaternary structure, interacts with TPR; this interaction mediates ZC3HC1 nuclear envelopes (NE)-association but also required for proper positioning of a substantial amount of TPR at the nuclear basket (NB). Phosphorylated. May also be weakly phosphorylated on Tyr residues. Widely expressed. Highly expressed in heart, skeletal muscle and testis. Expressed in brain, placenta, lung, kidney, liver, pancreas, spleen, thymus, prostate, ovary small intestine and colon. Weakly or not expressed in leukocytes.

It localises to the nucleus. The protein localises to the nucleus envelope. Functionally, required for proper positioning of a substantial amount of TPR at the nuclear basket (NB) through interaction with TPR. The protein is Zinc finger C3HC-type protein 1 of Homo sapiens (Human).